Reading from the N-terminus, the 404-residue chain is Cysteine desulfurase IscS (404 aa).

Pyridoxal 5'-phosphate contacts are provided by residues 75–76 (AT), N155, Q183, and 203–205 (SGH). K206 is subject to N6-(pyridoxal phosphate)lysine. T243 contacts pyridoxal 5'-phosphate. The active-site Cysteine persulfide intermediate is C328. [2Fe-2S] cluster is bound at residue C328.

The protein belongs to the class-V pyridoxal-phosphate-dependent aminotransferase family. NifS/IscS subfamily. In terms of assembly, homodimer. Forms a heterotetramer with IscU, interacts with other sulfur acceptors. Pyridoxal 5'-phosphate serves as cofactor.

It is found in the cytoplasm. The catalysed reaction is (sulfur carrier)-H + L-cysteine = (sulfur carrier)-SH + L-alanine. It participates in cofactor biosynthesis; iron-sulfur cluster biosynthesis. Its function is as follows. Master enzyme that delivers sulfur to a number of partners involved in Fe-S cluster assembly, tRNA modification or cofactor biosynthesis. Catalyzes the removal of elemental sulfur atoms from cysteine to produce alanine. Functions as a sulfur delivery protein for Fe-S cluster synthesis onto IscU, an Fe-S scaffold assembly protein, as well as other S acceptor proteins. In Shewanella denitrificans (strain OS217 / ATCC BAA-1090 / DSM 15013), this protein is Cysteine desulfurase IscS.